The sequence spans 211 residues: LexA repressor (211 aa).

A DNA-binding region (H-T-H motif) is located at residues 29-49; the sequence is VREICTAVGLRSTSTVHSHLN. Catalysis depends on for autocatalytic cleavage activity residues Ser-131 and Lys-169.

The protein belongs to the peptidase S24 family. As to quaternary structure, homodimer.

The enzyme catalyses Hydrolysis of Ala-|-Gly bond in repressor LexA.. Its function is as follows. Represses a number of genes involved in the response to DNA damage (SOS response), including recA and lexA. In the presence of single-stranded DNA, RecA interacts with LexA causing an autocatalytic cleavage which disrupts the DNA-binding part of LexA, leading to derepression of the SOS regulon and eventually DNA repair. This is LexA repressor from Clostridioides difficile (strain 630) (Peptoclostridium difficile).